A 308-amino-acid polypeptide reads, in one-letter code: Aspartate carbamoyltransferase catalytic subunit (308 aa).

2 residues coordinate carbamoyl phosphate: Arg-59 and Thr-60. Lys-87 is an L-aspartate binding site. The carbamoyl phosphate site is built by Arg-109, His-137, and Gln-140. Residues Arg-170 and Arg-224 each coordinate L-aspartate. The carbamoyl phosphate site is built by Gly-265 and Pro-266.

Belongs to the aspartate/ornithine carbamoyltransferase superfamily. ATCase family. As to quaternary structure, heterododecamer (2C3:3R2) of six catalytic PyrB chains organized as two trimers (C3), and six regulatory PyrI chains organized as three dimers (R2).

The enzyme catalyses carbamoyl phosphate + L-aspartate = N-carbamoyl-L-aspartate + phosphate + H(+). It participates in pyrimidine metabolism; UMP biosynthesis via de novo pathway; (S)-dihydroorotate from bicarbonate: step 2/3. In terms of biological role, catalyzes the condensation of carbamoyl phosphate and aspartate to form carbamoyl aspartate and inorganic phosphate, the committed step in the de novo pyrimidine nucleotide biosynthesis pathway. This chain is Aspartate carbamoyltransferase catalytic subunit, found in Flavobacterium johnsoniae (strain ATCC 17061 / DSM 2064 / JCM 8514 / BCRC 14874 / CCUG 350202 / NBRC 14942 / NCIMB 11054 / UW101) (Cytophaga johnsonae).